Here is a 218-residue protein sequence, read N- to C-terminus: Ribose-5-phosphate isomerase A (218 aa).

Substrate-binding positions include K7, 28-31 (TGST), 81-84 (DGAD), and 94-97 (KGGG). E103 functions as the Proton acceptor in the catalytic mechanism. A substrate-binding site is contributed by K121.

It belongs to the ribose 5-phosphate isomerase family. Homodimer.

It carries out the reaction aldehydo-D-ribose 5-phosphate = D-ribulose 5-phosphate. It participates in carbohydrate degradation; pentose phosphate pathway; D-ribose 5-phosphate from D-ribulose 5-phosphate (non-oxidative stage): step 1/1. Functionally, catalyzes the reversible conversion of ribose-5-phosphate to ribulose 5-phosphate. The polypeptide is Ribose-5-phosphate isomerase A (Vibrio vulnificus (strain YJ016)).